The chain runs to 473 residues: Chromosomal replication initiator protein DnaA (473 aa).

Residues 1–73 (MTNIEQDRWS…LSCWQAEMPQ (73 aa)) form a domain I, interacts with DnaA modulators region. The tract at residues 73-129 (QVHRVDLTVRTAMRCAAPAKDAPAHAEPRRDDGRPAPELRATAIAPVSATHEALGGS) is domain II. The interval 130–352 (PLDPRLTFGS…GAINRLLAHS (223 aa)) is domain III, AAA+ region. Glycine 177, glycine 179, lysine 180, and threonine 181 together coordinate ATP. The segment at 353–473 (KLNAQPVTLE…VELLKRQLQE (121 aa)) is domain IV, binds dsDNA.

The protein belongs to the DnaA family. In terms of assembly, oligomerizes as a right-handed, spiral filament on DNA at oriC.

The protein localises to the cytoplasm. Its function is as follows. Plays an essential role in the initiation and regulation of chromosomal replication. ATP-DnaA binds to the origin of replication (oriC) to initiate formation of the DNA replication initiation complex once per cell cycle. Binds the DnaA box (a 9 base pair repeat at the origin) and separates the double-stranded (ds)DNA. Forms a right-handed helical filament on oriC DNA; dsDNA binds to the exterior of the filament while single-stranded (ss)DNA is stabiized in the filament's interior. The ATP-DnaA-oriC complex binds and stabilizes one strand of the AT-rich DNA unwinding element (DUE), permitting loading of DNA polymerase. After initiation quickly degrades to an ADP-DnaA complex that is not apt for DNA replication. Binds acidic phospholipids. The chain is Chromosomal replication initiator protein DnaA from Rhodopseudomonas palustris (strain BisB18).